A 281-amino-acid polypeptide reads, in one-letter code: NH(3)-dependent NAD(+) synthetase (281 aa).

24-31 (GVSGGVDS) contacts ATP. Aspartate 30 is a binding site for Mg(2+). Position 145 (arginine 145) interacts with deamido-NAD(+). ATP is bound at residue threonine 165. Position 170 (glutamate 170) interacts with Mg(2+). Lysine 178 and aspartate 185 together coordinate deamido-NAD(+). Positions 194 and 216 each coordinate ATP.

It belongs to the NAD synthetase family. In terms of assembly, homodimer.

It catalyses the reaction deamido-NAD(+) + NH4(+) + ATP = AMP + diphosphate + NAD(+) + H(+). It participates in cofactor biosynthesis; NAD(+) biosynthesis; NAD(+) from deamido-NAD(+) (ammonia route): step 1/1. In terms of biological role, catalyzes the ATP-dependent amidation of deamido-NAD to form NAD. Uses ammonia as a nitrogen source. This Thermotoga maritima (strain ATCC 43589 / DSM 3109 / JCM 10099 / NBRC 100826 / MSB8) protein is NH(3)-dependent NAD(+) synthetase (nadE1).